Reading from the N-terminus, the 530-residue chain is Glucocorticoid modulatory element-binding protein 2 (530 aa).

The SAND domain maps to 81 to 163 (EEGENLEAEI…RKIMDSGELD (83 aa)). Cys110 serves as a coordination point for Zn(2+). The DNA site is built by Lys136, Lys140, Lys143, and Arg154. Residue Lys155 forms a Glycyl lysine isopeptide (Lys-Gly) (interchain with G-Cter in SUMO1); alternate linkage. Lys155 is covalently cross-linked (Glycyl lysine isopeptide (Lys-Gly) (interchain with G-Cter in SUMO2); alternate). 3 residues coordinate Zn(2+): His167, Cys171, and Cys175. The stretch at 304 to 348 (QMDRSREQYARDLAALEQQCDEHRRRAKELKHKSQHLSNVLMTLT) forms a coiled coil. Position 373 is a phosphoserine (Ser373).

Homodimer, and heterodimer of GMEB1 and GMEB2. GMEB1 and GMEB2 form the parvovirus initiator complex (PIF). Interacts with the glucocorticoid receptor (NR3C1). May interact with CREB-binding protein (CBP). In terms of tissue distribution, expressed in peripheral blood lymphocytes and fetal liver. Expressed preferentially in reproductive and/or developmentally important cells, such as testis, placenta, bone marrow and fetal tissues.

The protein resides in the nucleus. It is found in the cytoplasm. Its function is as follows. Trans-acting factor that binds to glucocorticoid modulatory elements (GME) present in the TAT (tyrosine aminotransferase) promoter and increases sensitivity to low concentrations of glucocorticoids. Also binds to the transferrin receptor promoter. Essential auxiliary factor for the replication of parvoviruses. The polypeptide is Glucocorticoid modulatory element-binding protein 2 (GMEB2) (Homo sapiens (Human)).